A 142-amino-acid polypeptide reads, in one-letter code: Baculoviral IAP repeat-containing protein 5 (142 aa).

Residues 18-88 (RISTFKNWPF…KHSSGCAFLS (71 aa)) form a BIR repeat. At Ser-20 the chain carries Phosphoserine; by AURKC. Lys-23 carries the post-translational modification N6-acetyllysine. Position 34 is a phosphothreonine; by CDK1 and CDK15 (Thr-34). Phosphothreonine is present on Thr-48. Residues Cys-57, Cys-60, His-77, and Cys-84 each contribute to the Zn(2+) site. 4 positions are modified to N6-acetyllysine: Lys-90, Lys-110, Lys-112, and Lys-115. Thr-117 carries the phosphothreonine; by AURKB modification. Lys-129 carries the post-translational modification N6-acetyllysine.

It belongs to the IAP family. Monomer or homodimer. Exists as a homodimer in the apo state and as a monomer in the CPC-bound state. The monomer protects cells against apoptosis more efficiently than the dimer. Only the dimeric form is capable of enhancing tubulin stability in cells. When phosphorylated, interacts with LAMTOR5/HBXIP; the resulting complex binds pro-CASP9, as well as active CASP9, but much less efficiently. Component of the chromosomal passenger complex (CPC) composed of at least BIRC5/survivin, CDCA8/borealin, INCENP, AURKB or AURKC; in the complex forms a triple-helix bundle-based subcomplex with INCENP and CDCA8. Interacts with JTB. Interacts (via BIR domain) with histone H3 phosphorylated at 'Thr-3' (H3pT3). Interacts with EVI5. Interacts with GTP-bound RAN in both the S and M phases of the cell cycle. Interacts with USP9X. Interacts with tubulin. Interacts with BIRC2/c-IAP1. The acetylated form at Lys-129 interacts with STAT3. The monomeric form deacetylated at Lys-129 interacts with XPO1/CRM1. The monomeric form interacts with XIAP/BIRC4. Both the dimeric and monomeric form can interact with DIABLO/SMAC. Interacts with BIRC6/bruce. Interacts with FBXL7; this interaction facilitates the polyubiquitination and subsequent proteasomal degradation of BIRC5 by the SCF(FBXL7) E3 ubiquitin-protein ligase complex. Post-translationally, ubiquitinated by the Cul9-RING ubiquitin-protein ligase complex, leading to its degradation. Ubiquitination is required for centrosomal targeting. Deubiquitinated by USP35 or USP38; leading to stabilization. Acetylation at Lys-129 results in its homodimerization, while deacetylation promotes the formation of monomers which heterodimerize with XPO1/CRM1 which facilitates its nuclear export. The acetylated form represses STAT3 transactivation. The dynamic equilibrium between its acetylation and deacetylation at Lys-129 determines its interaction with XPO1/CRM1, its subsequent subcellular localization, and its ability to inhibit STAT3 transactivation. In terms of processing, in vitro phosphorylation at Thr-117 by AURKB prevents interaction with INCENP and localization to mitotic chromosomes. Phosphorylation at Thr-48 by CK2 is critical for its mitotic and anti-apoptotic activities. Phosphorylation at Thr-34 by CDK15 is critical for its anti-apoptotic activity. Phosphorylation at Ser-20 by AURKC is critical for regulation of proper chromosome alignment and segregation, and possibly cytokinesis.

The protein localises to the cytoplasm. The protein resides in the nucleus. It localises to the chromosome. It is found in the centromere. Its subcellular location is the cytoskeleton. The protein localises to the spindle. The protein resides in the kinetochore. It localises to the midbody. In terms of biological role, multitasking protein that has dual roles in promoting cell proliferation and preventing apoptosis. Component of a chromosome passage protein complex (CPC) which is essential for chromosome alignment and segregation during mitosis and cytokinesis. Acts as an important regulator of the localization of this complex; directs CPC movement to different locations from the inner centromere during prometaphase to midbody during cytokinesis and participates in the organization of the center spindle by associating with polymerized microtubules. Involved in the recruitment of CPC to centromeres during early mitosis via association with histone H3 phosphorylated at 'Thr-3' (H3pT3) during mitosis. The complex with RAN plays a role in mitotic spindle formation by serving as a physical scaffold to help deliver the RAN effector molecule TPX2 to microtubules. May counteract a default induction of apoptosis in G2/M phase. The acetylated form represses STAT3 transactivation of target gene promoters. May play a role in neoplasia. Inhibitor of CASP3 and CASP7. Essential for the maintenance of mitochondrial integrity and function. The chain is Baculoviral IAP repeat-containing protein 5 (BIRC5) from Sus scrofa (Pig).